Here is a 1314-residue protein sequence, read N- to C-terminus: E3 ubiquitin-protein ligase RNF123 (1314 aa).

Ala2 carries the N-acetylalanine modification. A B30.2/SPRY domain is found at 74–254 (VDSEDNESQG…VAFNFGSRPL (181 aa)). The segment at 460 to 483 (HRSSRESRDGKEAREETTEERQRR) is disordered. Residues 462 to 483 (SSRESRDGKEAREETTEERQRR) are compositionally biased toward basic and acidic residues. Residue Ser675 is modified to Phosphoserine. Arg683 bears the Asymmetric dimethylarginine mark. The interval 968 to 974 (WILVRLW) is interaction with NFKB1. The Zn(2+) site is built by Cys1254, Cys1257, Cys1269, His1271, Cys1274, Cys1277, Cys1288, and Cys1291. The segment at 1254–1292 (CPICYAHPISAVFQPCGHKSCKACINQHLMNNKDCFFCK) adopts an RING-type zinc-finger fold.

Component of the KPC complex composed of RNF123/KPC1 and UBAC1/KPC2. Interacts with UBAC1 and CDKN1B via its N-terminal domain. Interacts with RIGI (via N-terminus) and IFIH1 (via N-terminus). Post-translationally, ubiquitinated, leading to its degradation. Deubiquitinated by USP19, thereby stimulating CDKN1B ubiquitin-dependent degradation.

The protein localises to the cytoplasm. It catalyses the reaction S-ubiquitinyl-[E2 ubiquitin-conjugating enzyme]-L-cysteine + [acceptor protein]-L-lysine = [E2 ubiquitin-conjugating enzyme]-L-cysteine + N(6)-ubiquitinyl-[acceptor protein]-L-lysine.. Its pathway is protein modification; protein ubiquitination. Its function is as follows. Catalytic subunit of the KPC complex that acts as E3 ubiquitin-protein ligase. Promotes the ubiquitination and proteasome-mediated degradation of CDKN1B which is the cyclin-dependent kinase inhibitor at the G0-G1 transition of the cell cycle. Also acts as a key regulator of the NF-kappa-B signaling by promoting maturation of the NFKB1 component of NF-kappa-B: acts by catalyzing ubiquitination of the NFKB1 p105 precursor, leading to limited proteasomal degradation of NFKB1 p105 and generation of the active NFKB1 p50 subunit. Functions also as an inhibitor of innate antiviral signaling mediated by RIGI and IFIH1 independently of its E3 ligase activity. Interacts with the N-terminal CARD domains of RIGI and IFIH1 and competes with the downstream adapter MAVS. This Mus musculus (Mouse) protein is E3 ubiquitin-protein ligase RNF123 (Rnf123).